Consider the following 416-residue polypeptide: UDP-N-acetylglucosamine 1-carboxyvinyltransferase (416 aa).

22 to 23 (KN) is a binding site for phosphoenolpyruvate. Arginine 92 is a binding site for UDP-N-acetyl-alpha-D-glucosamine. Cysteine 116 serves as the catalytic Proton donor. Cysteine 116 carries the post-translational modification 2-(S-cysteinyl)pyruvic acid O-phosphothioketal. UDP-N-acetyl-alpha-D-glucosamine contacts are provided by residues 121–125 (RPIDQ), aspartate 304, and isoleucine 326.

It belongs to the EPSP synthase family. MurA subfamily.

It is found in the cytoplasm. It carries out the reaction phosphoenolpyruvate + UDP-N-acetyl-alpha-D-glucosamine = UDP-N-acetyl-3-O-(1-carboxyvinyl)-alpha-D-glucosamine + phosphate. It participates in cell wall biogenesis; peptidoglycan biosynthesis. Cell wall formation. Adds enolpyruvyl to UDP-N-acetylglucosamine. In Desulfatibacillum aliphaticivorans, this protein is UDP-N-acetylglucosamine 1-carboxyvinyltransferase.